The following is a 216-amino-acid chain: UPF0502 protein VPA1223 (216 aa).

It belongs to the UPF0502 family.

This is UPF0502 protein VPA1223 from Vibrio parahaemolyticus serotype O3:K6 (strain RIMD 2210633).